Reading from the N-terminus, the 687-residue chain is Homeobox-leucine zipper protein HDG12 (687 aa).

The segment at 1–32 (MEFLGDSQNHDSSETEKKNKKKKRFHRHTPHQ) is disordered. Positions 8-17 (QNHDSSETEK) are enriched in basic and acidic residues. Over residues 18–30 (KNKKKKRFHRHTP) the composition is skewed to basic residues. Positions 21–80 (KKKRFHRHTPHQIQRLESTFNECQHPDEKQRNQLSRELGLAPRQIKFWFQNRRTQKKAQH) form a DNA-binding region, homeobox. Residues 87 to 150 (ALKEENDKIR…LERVSSIAAK (64 aa)) adopt a coiled-coil conformation. One can recognise an START domain in the interval 206–440 (SEMDKSLMTN…LQRMCERFTN (235 aa)).

It belongs to the HD-ZIP homeobox family. Class IV subfamily. In terms of assembly, interacts with BBM. Expressed in apical meristems and young epidermal tissue including trichomes and stipules. Expressed in lateral root tips, the L1 layer of apical inflorescence meristems and early flower primordia, carpel and stamen filament epidermis, stigma papillae, ovule primordia, nucellus and embryo.

The protein localises to the nucleus. Probable transcription factor that acts as a negative regulator of trichome branching in association with HDG11. Seems to promote cell differentiation. May regulate cell differentiation and proliferation during root and shoot meristem development. Acts as a positive regulator of SCL18/LAS expression. Involved, together with PDF2, in the regulation of flower organs development by promoting the expression of APETALA 3 (AP3) in the epidermis and internal cell layers of developing flowers. The polypeptide is Homeobox-leucine zipper protein HDG12 (Arabidopsis thaliana (Mouse-ear cress)).